The following is a 127-amino-acid chain: uncharacterized protein (127 aa).

The next 2 helical transmembrane spans lie at 48-68 (LYSL…PLSI) and 83-103 (VFLF…CLID).

It localises to the membrane. This is an uncharacterized protein from Saccharomyces cerevisiae (strain ATCC 204508 / S288c) (Baker's yeast).